The sequence spans 67 residues: UPF0434 protein RALTA_A0561 (67 aa).

It belongs to the UPF0434 family.

The sequence is that of UPF0434 protein RALTA_A0561 from Cupriavidus taiwanensis (strain DSM 17343 / BCRC 17206 / CCUG 44338 / CIP 107171 / LMG 19424 / R1) (Ralstonia taiwanensis (strain LMG 19424)).